We begin with the raw amino-acid sequence, 1110 residues long: Envelopment polyprotein (1110 aa).

The propeptide occupies 1–8; it reads MALKETDA. The Lumenal segment spans residues 1 to 290; that stretch reads MALKETDAKI…KYSKNIYKQT (290 aa). Residues 14-16 carry the Cell attachment site motif; the sequence is RGD. Asn-46 and Asn-92 each carry an N-linked (GlcNAc...) asparagine; by host glycan. 2 disulfide bridges follow: Cys-90/Cys-121 and Cys-98/Cys-132. Residues 153–171 form a non-covalent dimerization region; sequence IDNKRKLSIGTKFYIIESL. Residue Asn-186 is glycosylated (N-linked (GlcNAc...) asparagine; by host). The cysteines at positions 200 and 261 are disulfide-linked. Residues 291-342 form a helical membrane-spanning segment; the sequence is ACINFSWFRLIMIALIVYFPIRYLVNKTSKTLFYGYDLLGLITYPILLLINY. Over 343 to 459 the chain is Cytoplasmic; the sequence is LWSYFPLKCK…VPGCDRFVTN (117 aa). Topologically, residues 460-1044 are lumenal; that stretch reads RYDKCPEKDQ…HFGSFFDTVR (585 aa). N-linked (GlcNAc...) asparagine; by host glycans are attached at residues Asn-566, Asn-582, and Asn-957. Residues 1045 to 1065 form a helical membrane-spanning segment; it reads VVLLILFVFALAYLCSIVATM. The Cytoplasmic portion of the chain corresponds to 1066–1110; that stretch reads CRGYVRNKSYKTKYIEDTNDYSLVSTSSGKDTITRRRPPLDFSGI. The disordered stretch occupies residues 1091–1110; sequence TSSGKDTITRRRPPLDFSGI.

It belongs to the tospovirus envelope glycoprotein family. Homodimer; disulfide-linked. Heterodimer with Glycoprotein C. Interacts with nucleoprotein. As to quaternary structure, heterodimer with Glycoprotein N. Interacts with nucleoprotein. Post-translationally, specific enzymatic cleavages in vivo yield mature proteins including Glycoprotein N and Glycoprotein C. Glycosylated with O-linked glycans. Glycosylation is essential for proper subcellular location. In terms of processing, cleaved at acidic pH.

The protein resides in the virion membrane. The protein localises to the host Golgi apparatus membrane. It is found in the host endoplasmic reticulum membrane. Its function is as follows. Forms the spikes present at the surface of the virion together with Glycoprotein C. They are able to attach the virion to a cell receptor and to promote fusion of membranes after endocytosis of the virion. Plays a role in virus binding and/or entry into the vector midgut. Functionally, forms the spikes present at the surface of the virion together with Glycoprotein N. They are able to attach the virion to a cell receptor and to promote fusion of membranes after endocytosis of the virion. Probable class II fusion protein. This Impatiens necrotic spot virus (INSV) protein is Envelopment polyprotein (GP).